The chain runs to 211 residues: Claudin-1 (211 aa).

The Cytoplasmic segment spans residues 1 to 7 (MANAGLQ). The helical transmembrane segment at 8 to 28 (LLGFILASLGWIGSIVSTALP) threads the bilayer. The Extracellular segment spans residues 29–81 (QWKIYSYAGDNIVTAQAIYEGLWMSCVSQSTGQIQCKVFDSLLNLNSTLQATR). The cysteines at positions 54 and 64 are disulfide-linked. The chain crosses the membrane as a helical span at residues 82–102 (ALMVIGILLGLIAIFVSTIGM). At 103-115 (KCMRCLEDDEVQK) the chain is on the cytoplasmic side. A helical membrane pass occupies residues 116-136 (MWMAVIGGIIFVISGLATLVA). At 137-163 (TAWYGNRIVQEFYDPMTPVNARYEFGQ) the chain is on the extracellular side. The helical transmembrane segment at 164–184 (ALFTGWAAASLCLLGGALLSC) threads the bilayer. The Cytoplasmic segment spans residues 185–211 (SCPRKTTSYPTPRPYPKPTPSSGKDYV). Residues 190-211 (TTSYPTPRPYPKPTPSSGKDYV) are disordered. The segment at 210–211 (YV) is interactions with TJP1, TJP2, TJP3 and PATJ.

Belongs to the claudin family. Can form homo- and heteropolymers with other CLDN. Homopolymers interact with CLDN3, but not CLDN2, homopolymers. Directly interacts with TJP1/ZO-1, TJP2/ZO-2 and TJP3/ZO-3. Interacts with MPDZ and PATJ. Interacts with OCLN, CD81, CLDN4, CLDN6 and CLDN9. Detected in epididymis (at protein level). Detected in testis and epididymis.

The protein localises to the cell junction. It is found in the tight junction. It localises to the cell membrane. The protein resides in the basolateral cell membrane. In terms of biological role, claudins function as major constituents of the tight junction complexes that regulate the permeability of epithelia. While some claudin family members play essential roles in the formation of impermeable barriers, others mediate the permeability to ions and small molecules. Often, several claudin family members are coexpressed and interact with each other, and this determines the overall permeability. CLDN1 is required to prevent the paracellular diffusion of small molecules through tight junctions in the epidermis and is required for the normal barrier function of the skin. Required for normal water homeostasis and to prevent excessive water loss through the skin, probably via an indirect effect on the expression levels of other proteins, since CLDN1 itself seems to be dispensable for water barrier formation in keratinocyte tight junctions. In Rattus norvegicus (Rat), this protein is Claudin-1 (Cldn1).